Reading from the N-terminus, the 231-residue chain is tRNA (guanine-N(1)-)-methyltransferase (231 aa).

Gly112 is a binding site for S-adenosyl-L-methionine.

Belongs to the RNA methyltransferase TrmD family. Homodimer.

It is found in the cytoplasm. The catalysed reaction is guanosine(37) in tRNA + S-adenosyl-L-methionine = N(1)-methylguanosine(37) in tRNA + S-adenosyl-L-homocysteine + H(+). Specifically methylates guanosine-37 in various tRNAs. The chain is tRNA (guanine-N(1)-)-methyltransferase from Chlorobium chlorochromatii (strain CaD3).